The chain runs to 402 residues: Multidrug resistance protein MdtH (402 aa).

Residues methionine 1–lysine 12 are Cytoplasmic-facing. A helical transmembrane segment spans residues tyrosine 13 to isoleucine 33. Residues serine 34 to glutamate 98 are Periplasmic-facing. A helical transmembrane segment spans residues proline 99–phenylalanine 116. The Cytoplasmic portion of the chain corresponds to aspartate 117–serine 138. Residues leucine 139–leucine 159 form a helical membrane-spanning segment. Residues glutamine 160–arginine 164 are Periplasmic-facing. The chain crosses the membrane as a helical span at residues leucine 165–leucine 185. Residues proline 186–tyrosine 213 lie on the Cytoplasmic side of the membrane. The helical transmembrane segment at valine 214–methionine 234 threads the bilayer. Topologically, residues valine 235–alanine 243 are periplasmic. A helical transmembrane segment spans residues alanine 244 to alanine 264. Over arginine 265–arginine 276 the chain is Cytoplasmic. The helical transmembrane segment at leucine 277–leucine 297 threads the bilayer. The Periplasmic portion of the chain corresponds to glutamine 298–glutamine 299. A helical membrane pass occupies residues leucine 300–threonine 320. Topologically, residues leucine 321–arginine 339 are cytoplasmic. Residues leucine 340–glycine 360 form a helical membrane-spanning segment. Topologically, residues lysine 361–glutamate 367 are periplasmic. Residues leucine 368–phenylalanine 388 traverse the membrane as a helical segment. The Cytoplasmic segment spans residues serine 389–alanine 402.

This sequence belongs to the major facilitator superfamily. DHA1 family. MdtH (TC 2.A.1.2.21) subfamily.

It is found in the cell inner membrane. The chain is Multidrug resistance protein MdtH from Salmonella choleraesuis (strain SC-B67).